Consider the following 377-residue polypeptide: RING-H2 finger protein ATL22 (377 aa).

Positions 1-23 (MTSKLLPLLLNLIFLFFFPLLNA) are cleaved as a signal peptide. A helical transmembrane segment spans residues 244 to 264 (IMCLSLVGPLTALTFCVGLVM). The RING-type; atypical zinc-finger motif lies at 327–369 (CPICLSEYATKETVRCLPECEHCFHTECIDAWLKLHSSCPVCR).

Belongs to the RING-type zinc finger family. ATL subfamily.

Its subcellular location is the membrane. It catalyses the reaction S-ubiquitinyl-[E2 ubiquitin-conjugating enzyme]-L-cysteine + [acceptor protein]-L-lysine = [E2 ubiquitin-conjugating enzyme]-L-cysteine + N(6)-ubiquitinyl-[acceptor protein]-L-lysine.. It functions in the pathway protein modification; protein ubiquitination. This is RING-H2 finger protein ATL22 (ATL22) from Arabidopsis thaliana (Mouse-ear cress).